The primary structure comprises 477 residues: Protoporphyrinogen oxidase (477 aa).

Residues 9 to 14 (GGGISG), W42, 57 to 60 (GPRG), V257, A449, and 454 to 456 (VAV) contribute to the FAD site.

This sequence belongs to the protoporphyrinogen/coproporphyrinogen oxidase family. Protoporphyrinogen oxidase subfamily. In terms of assembly, monomer. Homodimer. FAD is required as a cofactor. As to expression, detected in liver (at protein level).

The protein resides in the mitochondrion inner membrane. It catalyses the reaction protoporphyrinogen IX + 3 O2 = protoporphyrin IX + 3 H2O2. It functions in the pathway porphyrin-containing compound metabolism; protoporphyrin-IX biosynthesis; protoporphyrin-IX from protoporphyrinogen-IX: step 1/1. In terms of biological role, catalyzes the 6-electron oxidation of protoporphyrinogen-IX to form protoporphyrin-IX. In Bos taurus (Bovine), this protein is Protoporphyrinogen oxidase (PPOX).